A 106-amino-acid polypeptide reads, in one-letter code: Tubulin-specific chaperone A (106 aa).

The residue at position 94 (S94) is a Phosphoserine.

It belongs to the TBCA family.

The protein localises to the cytoplasm. It localises to the cytoskeleton. In terms of biological role, tubulin-folding protein; involved in the early step of the tubulin folding pathway. In Saccharomyces cerevisiae (strain ATCC 204508 / S288c) (Baker's yeast), this protein is Tubulin-specific chaperone A (RBL2).